The sequence spans 353 residues: Photosystem II protein D1 (353 aa).

The residue at position 2 (T2) is an N-acetylthreonine. T2 bears the Phosphothreonine mark. 3 helical membrane passes run 29–46 (YIGWFGVLMIPTLLTATS), 118–133 (HFLLGVACYMGREWEL), and 142–156 (WIAVAYSAPVAAATA). Position 118 (H118) interacts with chlorophyll a. Y126 is a pheophytin a binding site. Positions 170 and 189 each coordinate [CaMn4O5] cluster. The helical transmembrane segment at 197-218 (FHMLGVAGVFGGSLFSAMHGSL) threads the bilayer. Residue H198 participates in chlorophyll a binding. Residues H215 and 264 to 265 (SF) contribute to the a quinone site. H215 lines the Fe cation pocket. H272 lines the Fe cation pocket. Residues 274–288 (FLAAWPVVGIWFTAL) form a helical membrane-spanning segment. 4 residues coordinate [CaMn4O5] cluster: H332, E333, D342, and A344. The propeptide occupies 345–353 (AVEAPSTIG).

It belongs to the reaction center PufL/M/PsbA/D family. As to quaternary structure, PSII is composed of 1 copy each of membrane proteins PsbA, PsbB, PsbC, PsbD, PsbE, PsbF, PsbH, PsbI, PsbJ, PsbK, PsbL, PsbM, PsbT, PsbX, PsbY, PsbZ, Psb30/Ycf12, at least 3 peripheral proteins of the oxygen-evolving complex and a large number of cofactors. It forms dimeric complexes. It depends on The D1/D2 heterodimer binds P680, chlorophylls that are the primary electron donor of PSII, and subsequent electron acceptors. It shares a non-heme iron and each subunit binds pheophytin, quinone, additional chlorophylls, carotenoids and lipids. D1 provides most of the ligands for the Mn4-Ca-O5 cluster of the oxygen-evolving complex (OEC). There is also a Cl(-1) ion associated with D1 and D2, which is required for oxygen evolution. The PSII complex binds additional chlorophylls, carotenoids and specific lipids. as a cofactor. Tyr-161 forms a radical intermediate that is referred to as redox-active TyrZ, YZ or Y-Z. Post-translationally, C-terminally processed by CTPA; processing is essential to allow assembly of the oxygen-evolving complex and thus photosynthetic growth.

It is found in the plastid. The protein resides in the chloroplast thylakoid membrane. The enzyme catalyses 2 a plastoquinone + 4 hnu + 2 H2O = 2 a plastoquinol + O2. Its function is as follows. Photosystem II (PSII) is a light-driven water:plastoquinone oxidoreductase that uses light energy to abstract electrons from H(2)O, generating O(2) and a proton gradient subsequently used for ATP formation. It consists of a core antenna complex that captures photons, and an electron transfer chain that converts photonic excitation into a charge separation. The D1/D2 (PsbA/PsbD) reaction center heterodimer binds P680, the primary electron donor of PSII as well as several subsequent electron acceptors. This chain is Photosystem II protein D1, found in Lemna minor (Common duckweed).